Consider the following 89-residue polypeptide: Small ribosomal subunit protein uS15 (89 aa).

The protein belongs to the universal ribosomal protein uS15 family. Part of the 30S ribosomal subunit. Forms a bridge to the 50S subunit in the 70S ribosome, contacting the 23S rRNA.

Its function is as follows. One of the primary rRNA binding proteins, it binds directly to 16S rRNA where it helps nucleate assembly of the platform of the 30S subunit by binding and bridging several RNA helices of the 16S rRNA. Functionally, forms an intersubunit bridge (bridge B4) with the 23S rRNA of the 50S subunit in the ribosome. The polypeptide is Small ribosomal subunit protein uS15 (Thermobifida fusca (strain YX)).